The following is a 314-amino-acid chain: uncharacterized protein (314 aa).

Residues 1-26 (MRGRVAGSCAPLGLLLVCLRLPGLFA) form the signal peptide. The span at 41–60 (GTNLPQLGQPSLTGPPNSEH) shows a compositional bias: polar residues. Disordered regions lie at residues 41–65 (GTNL…QPAL), 77–96 (LKLS…SAVQ), 147–191 (GSGP…GKIL), and 292–314 (PPGS…LQWG). The segment covering 147–157 (GSGPLPGESSP) has biased composition (low complexity). Residues 167–177 (SHLHQDSESRR) show a composition bias toward basic and acidic residues. Residues 303-314 (FPNPPSPGLQWG) show a composition bias toward pro residues.

As to quaternary structure, binds to numerous extracellular matrix proteins. Taste cell specific.

It is found in the secreted. Its subcellular location is the extracellular space. It localises to the extracellular matrix. This is an uncharacterized protein from Macaca mulatta (Rhesus macaque).